Reading from the N-terminus, the 353-residue chain is UDP-N-acetylglucosamine--N-acetylmuramyl-(pentapeptide) pyrophosphoryl-undecaprenol N-acetylglucosamine transferase (353 aa).

UDP-N-acetyl-alpha-D-glucosamine contacts are provided by residues 10-12 (TGG), Asn-124, Ser-183, and Gln-283.

The protein belongs to the glycosyltransferase 28 family. MurG subfamily.

The protein localises to the cell inner membrane. It catalyses the reaction di-trans,octa-cis-undecaprenyl diphospho-N-acetyl-alpha-D-muramoyl-L-alanyl-D-glutamyl-meso-2,6-diaminopimeloyl-D-alanyl-D-alanine + UDP-N-acetyl-alpha-D-glucosamine = di-trans,octa-cis-undecaprenyl diphospho-[N-acetyl-alpha-D-glucosaminyl-(1-&gt;4)]-N-acetyl-alpha-D-muramoyl-L-alanyl-D-glutamyl-meso-2,6-diaminopimeloyl-D-alanyl-D-alanine + UDP + H(+). It functions in the pathway cell wall biogenesis; peptidoglycan biosynthesis. Cell wall formation. Catalyzes the transfer of a GlcNAc subunit on undecaprenyl-pyrophosphoryl-MurNAc-pentapeptide (lipid intermediate I) to form undecaprenyl-pyrophosphoryl-MurNAc-(pentapeptide)GlcNAc (lipid intermediate II). This chain is UDP-N-acetylglucosamine--N-acetylmuramyl-(pentapeptide) pyrophosphoryl-undecaprenol N-acetylglucosamine transferase, found in Helicobacter acinonychis (strain Sheeba).